The following is an 84-amino-acid chain: MSILSFLLGEKKKSASVAKERLQLIIAHERAGGHAPADYLPALQRELVAVISKYVKISHEDIRVSLERQDDLEVLEVKIEIPQA.

The protein belongs to the MinE family.

Its function is as follows. Prevents the cell division inhibition by proteins MinC and MinD at internal division sites while permitting inhibition at polar sites. This ensures cell division at the proper site by restricting the formation of a division septum at the midpoint of the long axis of the cell. The sequence is that of Cell division topological specificity factor from Paraburkholderia xenovorans (strain LB400).